Consider the following 465-residue polypeptide: Cysteine--tRNA ligase (465 aa).

Cys-29 contributes to the Zn(2+) binding site. Positions Pro-31–Asn-41 match the 'HIGH' region motif. Cys-209, His-234, and Glu-238 together coordinate Zn(2+). The 'KMSKS' region signature appears at Lys-266–Ser-270. Lys-269 is a binding site for ATP. Residue Ser-270 is modified to Phosphoserine.

The protein belongs to the class-I aminoacyl-tRNA synthetase family. In terms of assembly, monomer. Zn(2+) is required as a cofactor.

The protein localises to the cytoplasm. The enzyme catalyses tRNA(Cys) + L-cysteine + ATP = L-cysteinyl-tRNA(Cys) + AMP + diphosphate. In Bacillus cereus (strain ATCC 10987 / NRS 248), this protein is Cysteine--tRNA ligase.